An 834-amino-acid polypeptide reads, in one-letter code: Probable glucan 1,3-beta-glucosidase D (834 aa).

Positions 1–33 (MPSHSRSRDRYGGRDSDREARYDYDYARRRYAT) are enriched in basic and acidic residues. Disordered regions lie at residues 1–188 (MPSH…ASHL) and 200–251 (QYEK…TKAR). Over 1–306 (MPSHSRSRDR…GGRPFWKRKK (306 aa)) the chain is Cytoplasmic. Over residues 34 to 45 (DDNDDDYDDDEL) the composition is skewed to acidic residues. Basic and acidic residues-rich tracts occupy residues 46–76 (EHGL…RDAE), 98–173 (YGHD…ETAA), 201–218 (YEKE…AAKA), and 228–245 (VVGE…ESHR). A helical; Signal-anchor for type II membrane protein membrane pass occupies residues 307-327 (WIGLGALILILVIVIPVAVVV). Residues 328 to 834 (SKKHDNKSDP…PDFGNLPEYY (507 aa)) lie on the Extracellular side of the membrane. The segment at 331-354 (HDNKSDPADPQGTSPGKSNLDGLS) is disordered. Residues Asn333, Asn379, Asn384, Asn396, Asn549, Asn561, and Asn570 are each glycosylated (N-linked (GlcNAc...) asparagine). The Proton donor role is filled by Glu600. N-linked (GlcNAc...) asparagine glycans are attached at residues Asn639, Asn672, and Asn692. Glu705 serves as the catalytic Nucleophile.

Belongs to the glycosyl hydrolase 5 (cellulase A) family.

The protein resides in the cell membrane. The enzyme catalyses Successive hydrolysis of beta-D-glucose units from the non-reducing ends of (1-&gt;3)-beta-D-glucans, releasing alpha-glucose.. Functionally, glucosidase involved in the degradation of cellulosic biomass. Active on lichenan. This chain is Probable glucan 1,3-beta-glucosidase D (exgD), found in Neosartorya fischeri (strain ATCC 1020 / DSM 3700 / CBS 544.65 / FGSC A1164 / JCM 1740 / NRRL 181 / WB 181) (Aspergillus fischerianus).